Consider the following 644-residue polypeptide: Far upstream element-binding protein 1 (644 aa).

2 disordered regions span residues 1 to 31 (MADY…NDAF) and 44 to 94 (KIGG…PMHQ). An N-acetylalanine modification is found at alanine 2. Over residues 14–27 (SAGGGGGGGGGGGV) the composition is skewed to gly residues. 2 positions are modified to phosphoserine: serine 52 and serine 55. The span at 65–77 (RPLEDGDQPDAKK) shows a compositional bias: basic and acidic residues. The span at 81 to 94 (QNDSFGTQLPPMHQ) shows a compositional bias: polar residues. KH domains lie at 100–164 (VMTE…KRLL), 185–251 (NAVQ…KEMV), and 275–339 (NEGI…AEII). Serine 140 is subject to Phosphoserine. At threonine 153 the chain carries Phosphothreonine. An omega-N-methylarginine mark is found at arginine 321, arginine 359, arginine 361, and arginine 363. The interval 346–365 (VQAGNPGGPGPGGRGRGRGQ) is disordered. Positions 350–365 (NPGGPGPGGRGRGRGQ) are enriched in gly residues. The region spanning 376–443 (LQEFNFIVPT…QQIDYARQLI (68 aa)) is the KH 4 domain. Threonine 432 is modified (phosphothreonine). Disordered stretches follow at residues 447–532 (IGGP…GTDP) and 548–580 (QAQP…AGQV). Positions 468 to 505 (PHGPPGPPGPGTPMGPYNPAPYNPGPPGPAPHGPPAPY) are enriched in pro residues. Low complexity predominate over residues 556–573 (PAGAPTTTQTNGQGDQQN). The residue at position 630 (serine 630) is a Phosphoserine.

Found in a complex with PUF60 and far upstream element (FUSE) DNA segment. Interacts with PUF60 and JTV1. Ubiquitinated. This targets the protein for proteasome-mediated degradation.

It is found in the nucleus. Functionally, regulates MYC expression by binding to a single-stranded far-upstream element (FUSE) upstream of the MYC promoter. May act both as activator and repressor of transcription. The sequence is that of Far upstream element-binding protein 1 (FUBP1) from Homo sapiens (Human).